Here is a 481-residue protein sequence, read N- to C-terminus: Sterol 14-alpha demethylase (481 aa).

The helical transmembrane segment at 1–21 (MFIEAIVLALTALILYSVYSV) threads the bilayer. C422 provides a ligand contact to heme.

The protein belongs to the cytochrome P450 family. Requires heme as cofactor.

Its subcellular location is the membrane. The enzyme catalyses a 14alpha-methyl steroid + 3 reduced [NADPH--hemoprotein reductase] + 3 O2 = a Delta(14) steroid + formate + 3 oxidized [NADPH--hemoprotein reductase] + 4 H2O + 4 H(+). Its pathway is steroid biosynthesis; zymosterol biosynthesis; zymosterol from lanosterol: step 1/6. Its function is as follows. Catalyzes C14-demethylation of lanosterol which is critical for ergosterol biosynthesis. It transforms lanosterol into 4,4'-dimethyl cholesta-8,14,24-triene-3-beta-ol. Favors C4 dimethylated substrates, the substrate preference order is 24-methylenedihydrolanosterol &gt; 24,25-dihydrolanosterol &gt; lanosterol &gt; obtusifoliol &gt; norlanosterol. In Trypanosoma cruzi (strain CL Brener), this protein is Sterol 14-alpha demethylase.